The following is a 654-amino-acid chain: MFFSLLLMLGLTEAEKIKICLQKQVNSSFSLHNGFGGNLYATEEKRMFELVKPKAGASVLNQSTWIGFGDSRTDQSNSAFPRSLMSAKTADKFRSLSGGSLMLSMFGPPGKVDYLYQGCGKHKVFYEGVNWSPHAAIDCYRKNWTDIKLNFQKSIYELASQSHCMSLVNALDKTIPLQVTKGVAKNCNNSFLKNPALYTQEVKPLEQICGEENLAFFTLPTQFGTYECKLHLVASCYFIYDSKEVYNKRGCGNYFQVIYDSSGKVVGGLDNRVSPYTGNSGDTPTMQCDMLQLKPGRYSVRSSPRFLLMPERSYCFDMKEKGPVTAVQSIWGKGRKSDYAVDQACLSTPGCMLIQKQKPYIGEADDHHGDQEMRELLSGLDYEARCISQSGWVNETSPFTEEYLLPPKFGRCPLAAKEESIPKIPDGLLIPTSGTDTTVTKPKSRIFGIDDLIIGLLFVAIVEAGIGGYLLGSRKESGGGVTKESAEKGFEKIGNDIQILRSSTNIAIEKLNDRISHDEQAIRDLTLEIENARSEALLGELGIIRALLVGNISIGLQESLWELASEITNRAGDLAVEVSPGCWIIDNNICDQSCQNFIFKFNETAPVPTIPPLDTKIDLQSDPFYWGSSLGLAITAANLMAALVISGIAICRTK.

A signal peptide spans 1–14 (MFFSLLLMLGLTEA). Residues 15–40 (EKIKICLQKQVNSSFSLHNGFGGNLY) are fusion domain-1. The Extracellular segment spans residues 15 to 629 (EKIKICLQKQ…QSDPFYWGSS (615 aa)). Cystine bridges form between Cys20/Cys582, Cys209/Cys251, Cys228/Cys315, and Cys236/Cys288. 2 N-linked (GlcNAc...) asparagine; by host glycosylation sites follow: Asn26 and Asn61. Residues 41-157 (ATEEKRMFEL…KLNFQKSIYE (117 aa)) form an esterase domain-1 region. The active-site Nucleophile is the Ser71. 2 N-linked (GlcNAc...) asparagine; by host glycosylation sites follow: Asn143 and Asn188. The N-acetyl-9-O-acetylneuraminic acid binding stretch occupies residues 157–309 (ELASQSHCMS…VRSSPRFLLM (153 aa)). The interval 309 to 363 (MPERSYCFDMKEKGPVTAVQSIWGKGRKSDYAVDQACLSTPGCMLIQKQKPYIGE) is esterase domain-2. Residues 364–654 (ADDHHGDQEM…ISGIAICRTK (291 aa)) are fusion domain-2. Residues Asp365 and His368 each act as charge relay system in the active site. 3 N-linked (GlcNAc...) asparagine; by host glycosylation sites follow: Asn394, Asn551, and Asn602. Residues 630 to 650 (LGLAITAANLMAALVISGIAI) traverse the membrane as a helical segment. The Cytoplasmic portion of the chain corresponds to 651–654 (CRTK).

This sequence belongs to the influenza viruses hemagglutinin family. Homotrimer of disulfide-linked HEF1-HEF2. Post-translationally, in natural infection, inactive HEF is matured into HEF1 and HEF2 outside the cell by one or more trypsin-like, arginine-specific endoprotease.

The protein localises to the virion membrane. Its subcellular location is the host cell membrane. The enzyme catalyses N-acetyl-9-O-acetylneuraminate + H2O = N-acetylneuraminate + acetate + H(+). It catalyses the reaction N-acetyl-4-O-acetylneuraminate + H2O = N-acetylneuraminate + acetate + H(+). In terms of biological role, binds to the N-acetyl-9-O-acetylneuraminic acid residues on the cell surface, bringing about the attachment of the virus particle to the cell. Plays a major role in the determination of host range restriction and virulence. Class I viral fusion protein. Responsible for penetration of the virus into the cell cytoplasm by mediating the fusion of the membrane of the endocytosed virus particle with the endosomal membrane. Low pH in endosomes induce an irreversible conformational change in HEF2, releasing the fusion hydrophobic peptide. Several trimers are required to form a competent fusion pore. Displays a receptor-destroying activity which is a neuraminidate-O-acetyl esterase. This activity cleaves off any receptor on the cell surface, which would otherwise prevent virions release. These cleavages prevent self-aggregation and ensure the efficient spread of the progeny virus from cell to cell. The polypeptide is Hemagglutinin-esterase-fusion glycoprotein (Influenza C virus (strain C/California/1978)).